The following is a 156-amino-acid chain: Small ribosomal subunit protein uS7 (156 aa).

It belongs to the universal ribosomal protein uS7 family. In terms of assembly, part of the 30S ribosomal subunit. Contacts proteins S9 and S11.

In terms of biological role, one of the primary rRNA binding proteins, it binds directly to 16S rRNA where it nucleates assembly of the head domain of the 30S subunit. Is located at the subunit interface close to the decoding center, probably blocks exit of the E-site tRNA. The sequence is that of Small ribosomal subunit protein uS7 from Streptococcus suis (strain 98HAH33).